Here is a 120-residue protein sequence, read N- to C-terminus: Large ribosomal subunit protein bL19 (120 aa).

It belongs to the bacterial ribosomal protein bL19 family.

In terms of biological role, this protein is located at the 30S-50S ribosomal subunit interface and may play a role in the structure and function of the aminoacyl-tRNA binding site. This is Large ribosomal subunit protein bL19 from Nostoc punctiforme (strain ATCC 29133 / PCC 73102).